A 275-amino-acid polypeptide reads, in one-letter code: Large ribosomal subunit protein uL2 (275 aa).

Positions 212–259 (RWKGIRPTNRGVTMNPVDHPHGGGEGKTSGGRHPVTPWGQPTRGYKTR) are disordered.

Belongs to the universal ribosomal protein uL2 family. As to quaternary structure, part of the 50S ribosomal subunit. Forms a bridge to the 30S subunit in the 70S ribosome.

One of the primary rRNA binding proteins. Required for association of the 30S and 50S subunits to form the 70S ribosome, for tRNA binding and peptide bond formation. It has been suggested to have peptidyltransferase activity; this is somewhat controversial. Makes several contacts with the 16S rRNA in the 70S ribosome. The protein is Large ribosomal subunit protein uL2 of Acidobacterium capsulatum (strain ATCC 51196 / DSM 11244 / BCRC 80197 / JCM 7670 / NBRC 15755 / NCIMB 13165 / 161).